Here is a 110-residue protein sequence, read N- to C-terminus: DNA-binding protein PAE3044 (110 aa).

The protein belongs to the PDCD5 family.

This Pyrobaculum aerophilum (strain ATCC 51768 / DSM 7523 / JCM 9630 / CIP 104966 / NBRC 100827 / IM2) protein is DNA-binding protein PAE3044.